The chain runs to 189 residues: MEVILLERIGRLGQMGDTVKVKDGYARNFLLPQGKALRANEANKKKFEGQRAQLEAQNLERKNEAQAVADKLNGESFIVVRSAGETGQLYGSVSTRDIAEIITANGFTLHRNQVELNHPIKTIGLHEVSVSLHPEVQVKVMVNIARSTEEAERQAKGEDLTSIEAIYGIEEQPLSEEVFDDEDEAEDQA.

It belongs to the bacterial ribosomal protein bL9 family.

Its function is as follows. Binds to the 23S rRNA. In Brucella abortus (strain S19), this protein is Large ribosomal subunit protein bL9.